The sequence spans 283 residues: Pantothenate synthetase (283 aa).

30 to 37 contacts ATP; that stretch reads MGNLHLGH. H37 acts as the Proton donor in catalysis. Q61 is a (R)-pantoate binding site. Q61 lines the beta-alanine pocket. Position 149–152 (149–152) interacts with ATP; the sequence is GQKD. Q155 lines the (R)-pantoate pocket. ATP-binding positions include I178 and 186-189; that span reads MSSR.

Belongs to the pantothenate synthetase family. As to quaternary structure, homodimer.

It is found in the cytoplasm. The catalysed reaction is (R)-pantoate + beta-alanine + ATP = (R)-pantothenate + AMP + diphosphate + H(+). Its pathway is cofactor biosynthesis; (R)-pantothenate biosynthesis; (R)-pantothenate from (R)-pantoate and beta-alanine: step 1/1. Its function is as follows. Catalyzes the condensation of pantoate with beta-alanine in an ATP-dependent reaction via a pantoyl-adenylate intermediate. This is Pantothenate synthetase from Shewanella halifaxensis (strain HAW-EB4).